The primary structure comprises 153 residues: D-aminoacyl-tRNA deacylase (153 aa).

Residues 142-143 carry the Gly-cisPro motif, important for rejection of L-amino acids motif; that stretch reads GP.

This sequence belongs to the DTD family. As to quaternary structure, homodimer.

It is found in the cytoplasm. The catalysed reaction is glycyl-tRNA(Ala) + H2O = tRNA(Ala) + glycine + H(+). The enzyme catalyses a D-aminoacyl-tRNA + H2O = a tRNA + a D-alpha-amino acid + H(+). Functionally, an aminoacyl-tRNA editing enzyme that deacylates mischarged D-aminoacyl-tRNAs. Also deacylates mischarged glycyl-tRNA(Ala), protecting cells against glycine mischarging by AlaRS. Acts via tRNA-based rather than protein-based catalysis; rejects L-amino acids rather than detecting D-amino acids in the active site. By recycling D-aminoacyl-tRNA to D-amino acids and free tRNA molecules, this enzyme counteracts the toxicity associated with the formation of D-aminoacyl-tRNA entities in vivo and helps enforce protein L-homochirality. The protein is D-aminoacyl-tRNA deacylase of Cupriavidus necator (strain ATCC 17699 / DSM 428 / KCTC 22496 / NCIMB 10442 / H16 / Stanier 337) (Ralstonia eutropha).